The sequence spans 198 residues: Crinkler effector protein BLC01 (198 aa).

The signal sequence occupies residues 1-15 (MMVKLICAIVDIAGA). Positions 16–55 (AFPIDIDTNELVGDFKKVIKAENSRTIACDANDLRLFLAK) are LQLFLAK domain. The interval 56–113 (TDGRWLTEFEVQNGVADISVFEELDVVGAPLNMIGLSEETVSSVAITKELVKAKKTPL) is DWL domain. Positions 114–119 (HVLVVP) match the HVLVXXP motif motif.

It belongs to the Crinkler effector family.

It localises to the secreted. It is found in the host cell. In terms of biological role, secreted effector that elicits necrosis in host plants, a characteristic of plant innate immunity. The polypeptide is Crinkler effector protein BLC01 (Bremia lactucae (Lettuce downy mildew)).